The primary structure comprises 826 residues: Periplasmic nitrate reductase (826 aa).

Residues 1–32 constitute a signal peptide (tat-type signal); sequence MELNRRDFMKANAAIAAAAAAGITIPVKNVQA. The 57-residue stretch at 37–93 folds into the 4Fe-4S Mo/W bis-MGD-type domain; the sequence is IRWDKAPCRYCGTGCSVLVGTKDGRVVATQGDPDAEVNRGLNCIKGYFLSKIMYGAD. 4 residues coordinate [4Fe-4S] cluster: Cys-44, Cys-47, Cys-51, and Cys-79. Residues Lys-81, Gln-148, Asn-173, Cys-177, 210 to 217, 241 to 245, 260 to 262, Met-370, Gln-374, Asn-480, 506 to 507, Lys-529, Asp-556, and 716 to 725 contribute to the Mo-bis(molybdopterin guanine dinucleotide) site; these read WGSNMAEM, STYEH, QSD, SD, and TGRVLEHWHT. Phe-792 contributes to the substrate binding site. Positions 800 and 817 each coordinate Mo-bis(molybdopterin guanine dinucleotide).

The protein belongs to the prokaryotic molybdopterin-containing oxidoreductase family. NasA/NapA/NarB subfamily. As to quaternary structure, component of the periplasmic nitrate reductase NapAB complex composed of NapA and NapB. The cofactor is [4Fe-4S] cluster. Requires Mo-bis(molybdopterin guanine dinucleotide) as cofactor. Post-translationally, predicted to be exported by the Tat system. The position of the signal peptide cleavage has not been experimentally proven.

The protein resides in the periplasm. It catalyses the reaction 2 Fe(II)-[cytochrome] + nitrate + 2 H(+) = 2 Fe(III)-[cytochrome] + nitrite + H2O. Catalytic subunit of the periplasmic nitrate reductase complex NapAB. Receives electrons from NapB and catalyzes the reduction of nitrate to nitrite. The sequence is that of Periplasmic nitrate reductase from Actinobacillus succinogenes (strain ATCC 55618 / DSM 22257 / CCUG 43843 / 130Z).